A 233-amino-acid chain; its full sequence is Putative nosiheptide resistance regulatory protein (233 aa).

Positions 93 to 112 (RKAARQAADYSRPMIEQAVA) form a DNA-binding region, H-T-H motif. Residues 190-233 (PPEATEVPESGRLTSVDGSAEAVLDPEVQAKEAAEEAAKRDDQA) form a disordered region. Residues 217–233 (VQAKEAAEEAAKRDDQA) are compositionally biased toward basic and acidic residues.

Seems to be involved in the regulation of nhs expression. This Streptomyces actuosus protein is Putative nosiheptide resistance regulatory protein.